A 100-amino-acid chain; its full sequence is Urease subunit gamma (100 aa).

It belongs to the urease gamma subunit family. In terms of assembly, heterotrimer of UreA (gamma), UreB (beta) and UreC (alpha) subunits. Three heterotrimers associate to form the active enzyme.

The protein resides in the cytoplasm. The enzyme catalyses urea + 2 H2O + H(+) = hydrogencarbonate + 2 NH4(+). The protein operates within nitrogen metabolism; urea degradation; CO(2) and NH(3) from urea (urease route): step 1/1. This is Urease subunit gamma from Lachnoclostridium phytofermentans (strain ATCC 700394 / DSM 18823 / ISDg) (Clostridium phytofermentans).